Reading from the N-terminus, the 830-residue chain is MKLSRRDFMKANAAVAAAAAAGMTIPTVAKAVGETTNAIKWDKAPCRFCGTGCGVLVGTQNGRIVASQGDPDSPVNRGLNCIKGYFLPKIMYGKDRLTQPLLRMKDGQYDKEGDFTPISWEKAFDIMELKFKNALKEKGPTAVGMFGSGQWTVWEGYAALKLLKGGFRSNNLDPNARHCMASSVVGFMRTFGMDEPMGCYDDIEEADAFVLWGSNMAEMHPVLWSRMTSRRLTNAHVRIAVLSTYEHRSFELADNPIVFTPQTDLVIMNYIANYIIQNNAVDKDFLAQHVNFRRGATDIGYGLRPTHPLEKAAKNPGSDASEPMSFEDFKTFVAEYTLEKTAKMSGVPEDQLESLAQLYADPKVKLVSYWTMGFNQHTRGVWANNMCYNLHLLTGKISTPGSGPFSLTGQPSACGTAREVGTFSHRLPADMVVTNEKHRQIAETTWQLPAGTIPEKVGLHAVAQDRALKDGTLNAYWVMCNNNMQAGPNINEERMPGWRDPRNFIVVSDPYPTISALSADLILPTSMWVEKEGAYGNAERRTQFWRQQVPSPGEAKSDLWQIVEFAKRFNVEEVWPAELVNQKPEYRGKNLYEVLFANDVVSKYPLSEIPDDQLNDEARDFGFYIQKGLFEEYASFGRGHAHDLAPFDVYHQVRGLRWPVVDGKETLWRYREGFDPFVPKGEEVRFYGKPDGKAVIFALPYEPAAESPDQEYDLWLSTGRVLEHWHTGSMTRRVPELHRAFPEAVLFIHPLDAKARGLHRGDKVKVISRRGEVISLVETRGRNRPPRGLVYMPFFDAAQLVNNLTLDATDPLSKETDFKKCAVKLERVVA.

The segment at residues 1–31 (MKLSRRDFMKANAAVAAAAAAGMTIPTVAKA) is a signal peptide (tat-type signal). The region spanning 39 to 95 (IKWDKAPCRFCGTGCGVLVGTQNGRIVASQGDPDSPVNRGLNCIKGYFLPKIMYGKD) is the 4Fe-4S Mo/W bis-MGD-type domain. [4Fe-4S] cluster-binding residues include Cys-46, Cys-49, Cys-53, and Cys-81. Residues Lys-83, Gln-150, Asn-175, Cys-179, 212-219 (WGSNMAEM), 243-247 (STYEH), 262-264 (QTD), Met-372, Gln-376, Asn-482, 508-509 (SD), Lys-531, Asp-558, and 718-727 (TGRVLEHWHT) contribute to the Mo-bis(molybdopterin guanine dinucleotide) site. Position 794 (Phe-794) interacts with substrate. Mo-bis(molybdopterin guanine dinucleotide) is bound by residues Asn-802 and Lys-819.

It belongs to the prokaryotic molybdopterin-containing oxidoreductase family. NasA/NapA/NarB subfamily. In terms of assembly, component of the periplasmic nitrate reductase NapAB complex composed of NapA and NapB. [4Fe-4S] cluster is required as a cofactor. Mo-bis(molybdopterin guanine dinucleotide) serves as cofactor. In terms of processing, predicted to be exported by the Tat system. The position of the signal peptide cleavage has not been experimentally proven.

Its subcellular location is the periplasm. It carries out the reaction 2 Fe(II)-[cytochrome] + nitrate + 2 H(+) = 2 Fe(III)-[cytochrome] + nitrite + H2O. In terms of biological role, catalytic subunit of the periplasmic nitrate reductase complex NapAB. Receives electrons from NapB and catalyzes the reduction of nitrate to nitrite. This Yersinia pseudotuberculosis serotype IB (strain PB1/+) protein is Periplasmic nitrate reductase.